We begin with the raw amino-acid sequence, 504 residues long: 26S proteasome non-ATPase regulatory subunit 5 (504 aa).

A2 carries the N-acetylalanine modification.

It belongs to the proteasome subunit S5B/HSM3 family. As to quaternary structure, interacts with PSMC1, PSMC2, PSMD1 and PSMD6. Part of transient complex containing PSMD5, PSMC2, PSMC1 and PSMD2 formed during the assembly of the 26S proteasome.

Functionally, acts as a chaperone during the assembly of the 26S proteasome, specifically of the base subcomplex of the PA700/19S regulatory complex (RC). In the initial step of the base subcomplex assembly is part of an intermediate PSMD5:PSMC2:PSMC1:PSMD2 module which probably assembles with a PSMD10:PSMC4:PSMC5:PAAF1 module followed by dissociation of PSMD5. The sequence is that of 26S proteasome non-ATPase regulatory subunit 5 (Psmd5) from Mus musculus (Mouse).